The following is a 354-amino-acid chain: Protein RecA (354 aa).

68 to 75 serves as a coordination point for ATP; the sequence is GPESSGKT.

This sequence belongs to the RecA family.

The protein localises to the cytoplasm. Can catalyze the hydrolysis of ATP in the presence of single-stranded DNA, the ATP-dependent uptake of single-stranded DNA by duplex DNA, and the ATP-dependent hybridization of homologous single-stranded DNAs. It interacts with LexA causing its activation and leading to its autocatalytic cleavage. This is Protein RecA from Synechocystis sp. (strain ATCC 27184 / PCC 6803 / Kazusa).